Consider the following 298-residue polypeptide: ADP/ATP translocase 1 (298 aa).

The Mitochondrial intermembrane portion of the chain corresponds to 1-7 (MGDQALS). Glycine 2 bears the N-acetylglycine mark. The Solcar 1 repeat unit spans residues 6 to 98 (LSFLKDFLAG…FAFKDKYKQI (93 aa)). At serine 7 the chain carries Phosphoserine. The helical transmembrane segment at 8-37 (FLKDFLAGGIAAAVSKTAVAPIERVKLLLQ) threads the bilayer. The Mitochondrial matrix portion of the chain corresponds to 38–74 (VQHASKQISAEKQYKGIIDCVVRIPKEQGFLSFWRGN). Lysine 52 is modified (N6,N6,N6-trimethyllysine). Residues 75 to 99 (LANVIRYFPTQALNFAFKDKYKQIF) form a helical membrane-spanning segment. ADP contacts are provided by arginine 80 and lysine 92. Residues 100-109 (LGGVDRHKQF) are Mitochondrial intermembrane-facing. A helical transmembrane segment spans residues 110–130 (WRYFAGNLASGGAAGATSLCF). Solcar repeat units follow at residues 111 to 201 (RYFA…AKGM) and 212 to 297 (VSWM…IKKY). Residues 131 to 178 (VYPLDFARTRLAADVGKGSSQREFNGLGDCLTKIFKSDGLKGLYQGFS) lie on the Mitochondrial matrix side of the membrane. Lysine 147 carries the post-translational modification N6-succinyllysine. A phosphoserine mark is found at serine 149 and serine 150. Residue cysteine 160 is modified to S-nitrosocysteine. A helical transmembrane segment spans residues 179–199 (VSVQGIIIYRAAYFGVYDTAK). The Mitochondrial intermembrane segment spans residues 200 to 210 (GMLPDPKNVHI). The helical transmembrane segment at 211–231 (IVSWMIAQSVTAVAGLVSYPF) threads the bilayer. Over 232-273 (DTVRRRMMMQSGRKGADIMYTGTVDCWRKIAKDEGRKAFFKG) the chain is Mitochondrial matrix. An ADP-binding site is contributed by arginine 235. The interval 235–240 (RRRMMM) is important for transport activity. A Nucleotide carrier signature motif motif is present at residues 235 to 240 (RRRMMM). An N6-succinyllysine mark is found at lysine 245 and lysine 272. Residues 274-291 (AWSNVLRGMGGAFVLVLY) form a helical membrane-spanning segment. Over 292–298 (DEIKKYV) the chain is Mitochondrial intermembrane.

It belongs to the mitochondrial carrier (TC 2.A.29) family. As to quaternary structure, monomer. Found in a complex with ARL2, ARL2BP and SLC25A4/ANT1. Interacts with ARL2BP. Interacts with TIMM44; leading to inhibit the presequence translocase TIMM23, thereby promoting stabilization of PINK1. Under cell death induction, transglutaminated by TGM2. Transglutamination leads to formation of covalent cross-links between a glutamine and the epsilon-amino group of a lysine residue, forming polymers.

It localises to the mitochondrion inner membrane. Its subcellular location is the membrane. It catalyses the reaction ADP(in) + ATP(out) = ADP(out) + ATP(in). The catalysed reaction is H(+)(in) = H(+)(out). Its activity is regulated as follows. The matrix-open state (m-state) is inhibited by the membrane-permeable bongkrekic acid (BKA). The cytoplasmic-open state (c-state) is inhibited by the membrane-impermeable toxic inhibitor carboxyatractyloside (CATR). Proton transporter activity is inhibited by ADP:ATP antiporter activity. ADP:ATP antiporter that mediates import of ADP into the mitochondrial matrix for ATP synthesis, and export of ATP out to fuel the cell. Cycles between the cytoplasmic-open state (c-state) and the matrix-open state (m-state): operates by the alternating access mechanism with a single substrate-binding site intermittently exposed to either the cytosolic (c-state) or matrix (m-state) side of the inner mitochondrial membrane. In addition to its ADP:ATP antiporter activity, also involved in mitochondrial uncoupling and mitochondrial permeability transition pore (mPTP) activity. Plays a role in mitochondrial uncoupling by acting as a proton transporter: proton transport uncouples the proton flows via the electron transport chain and ATP synthase to reduce the efficiency of ATP production and cause mitochondrial thermogenesis. Proton transporter activity is inhibited by ADP:ATP antiporter activity, suggesting that SLC25A4/ANT1 acts as a master regulator of mitochondrial energy output by maintaining a delicate balance between ATP production (ADP:ATP antiporter activity) and thermogenesis (proton transporter activity). Proton transporter activity requires free fatty acids as cofactor, but does not transport it. Also plays a key role in mPTP opening, a non-specific pore that enables free passage of the mitochondrial membranes to solutes of up to 1.5 kDa, and which contributes to cell death. It is however unclear if SLC25A4/ANT1 constitutes a pore-forming component of mPTP or regulates it. Acts as a regulator of mitophagy independently of ADP:ATP antiporter activity: promotes mitophagy via interaction with TIMM44, leading to inhibit the presequence translocase TIMM23, thereby promoting stabilization of PINK1. The protein is ADP/ATP translocase 1 of Rattus norvegicus (Rat).